The chain runs to 370 residues: DNA replication and repair protein RecF (370 aa).

An ATP-binding site is contributed by 30–37 (GENAQGKT).

It belongs to the RecF family.

It localises to the cytoplasm. Functionally, the RecF protein is involved in DNA metabolism; it is required for DNA replication and normal SOS inducibility. RecF binds preferentially to single-stranded, linear DNA. It also seems to bind ATP. The protein is DNA replication and repair protein RecF of Bacillus velezensis (strain DSM 23117 / BGSC 10A6 / LMG 26770 / FZB42) (Bacillus amyloliquefaciens subsp. plantarum).